Here is a 52-residue protein sequence, read N- to C-terminus: Alpha-crystallin B chain (52 aa).

It belongs to the small heat shock protein (HSP20) family. As to quaternary structure, homodimer. Aggregates with homologous proteins, including alpha-A-crystallin and the small heat shock protein HSPB1, to form large heteromeric complexes.

Its function is as follows. May contribute to the transparency and refractive index of the lens. The polypeptide is Alpha-crystallin B chain (CRYAB) (Turdus merula (Common blackbird)).